We begin with the raw amino-acid sequence, 119 residues long: Ribosome-binding factor A (119 aa).

Belongs to the RbfA family. Monomer. Binds 30S ribosomal subunits, but not 50S ribosomal subunits or 70S ribosomes.

The protein resides in the cytoplasm. One of several proteins that assist in the late maturation steps of the functional core of the 30S ribosomal subunit. Associates with free 30S ribosomal subunits (but not with 30S subunits that are part of 70S ribosomes or polysomes). Required for efficient processing of 16S rRNA. May interact with the 5'-terminal helix region of 16S rRNA. This is Ribosome-binding factor A from Buchnera aphidicola subsp. Baizongia pistaciae (strain Bp).